Reading from the N-terminus, the 283-residue chain is Ribosomal RNA small subunit methyltransferase A (283 aa).

S-adenosyl-L-methionine-binding residues include N13, L15, G39, E59, D87, and N108.

The protein belongs to the class I-like SAM-binding methyltransferase superfamily. rRNA adenine N(6)-methyltransferase family. RsmA subfamily.

It is found in the cytoplasm. It catalyses the reaction adenosine(1518)/adenosine(1519) in 16S rRNA + 4 S-adenosyl-L-methionine = N(6)-dimethyladenosine(1518)/N(6)-dimethyladenosine(1519) in 16S rRNA + 4 S-adenosyl-L-homocysteine + 4 H(+). Its function is as follows. Specifically dimethylates two adjacent adenosines (A1518 and A1519) in the loop of a conserved hairpin near the 3'-end of 16S rRNA in the 30S particle. May play a critical role in biogenesis of 30S subunits. This chain is Ribosomal RNA small subunit methyltransferase A, found in Helicobacter hepaticus (strain ATCC 51449 / 3B1).